The primary structure comprises 191 residues: Prostaglandin-H2 D-isomerase (191 aa).

The signal sequence occupies residues 1–24 (MGALCTLWLGLVLLGVLGALQTSA). Residue glutamine 25 is modified to Pyrrolidone carboxylic acid. N-linked (GlcNAc...) asparagine glycosylation occurs at asparagine 51. The active-site Nucleophile is the cysteine 65. A glycan (N-linked (GlcNAc...) asparagine) is linked at asparagine 78. The cysteines at positions 89 and 186 are disulfide-linked.

The protein belongs to the calycin superfamily. Lipocalin family. Monomer. In terms of processing, N- and O-glycosylated. Both N-glycosylation recognition sites are almost quantitatively occupied by N-glycans of the biantennary complex type, with a considerable proportion of structures bearing a bisecting GlcNAc. N-glycan at Asn-78: dHex1Hex5HexNAc4. Agalacto structure as well as sialylated and nonsialylated oligosaccharides bearing alpha2-3- and/or alpha2-6-linked NeuNAc are present.

It localises to the rough endoplasmic reticulum. The protein localises to the nucleus membrane. It is found in the golgi apparatus. The protein resides in the cytoplasm. Its subcellular location is the perinuclear region. It localises to the secreted. It catalyses the reaction prostaglandin H2 = prostaglandin D2. Catalyzes the conversion of PGH2 to PGD2, a prostaglandin involved in smooth muscle contraction/relaxation and a potent inhibitor of platelet aggregation. Involved in a variety of CNS functions, such as sedation, NREM sleep and PGE2-induced allodynia, and may have an anti-apoptotic role in oligodendrocytes. Binds small non-substrate lipophilic molecules, including biliverdin, bilirubin, retinal, retinoic acid and thyroid hormone, and may act as a scavenger for harmful hydrophobic molecules and as a secretory retinoid and thyroid hormone transporter. Possibly involved in development and maintenance of the blood-brain, blood-retina, blood-aqueous humor and blood-testis barrier. It is likely to play important roles in both maturation and maintenance of the central nervous system and male reproductive system. Involved in PLA2G3-dependent maturation of mast cells. PLA2G3 is secreted by immature mast cells and acts on nearby fibroblasts upstream to PTDGS to synthesize PGD2, which in turn promotes mast cell maturation and degranulation via PTGDR. This chain is Prostaglandin-H2 D-isomerase (PTGDS), found in Canis lupus familiaris (Dog).